The sequence spans 346 residues: Phosphoribosylformylglycinamidine cyclo-ligase (346 aa).

The protein belongs to the AIR synthase family.

The protein localises to the cytoplasm. The enzyme catalyses 2-formamido-N(1)-(5-O-phospho-beta-D-ribosyl)acetamidine + ATP = 5-amino-1-(5-phospho-beta-D-ribosyl)imidazole + ADP + phosphate + H(+). The protein operates within purine metabolism; IMP biosynthesis via de novo pathway; 5-amino-1-(5-phospho-D-ribosyl)imidazole from N(2)-formyl-N(1)-(5-phospho-D-ribosyl)glycinamide: step 2/2. The polypeptide is Phosphoribosylformylglycinamidine cyclo-ligase (Alteromonas mediterranea (strain DSM 17117 / CIP 110805 / LMG 28347 / Deep ecotype)).